The following is a 581-amino-acid chain: Arginine--tRNA ligase (581 aa).

The 'HIGH' region motif lies at 126-136 (PNLAKEMHVGH).

It belongs to the class-I aminoacyl-tRNA synthetase family. In terms of assembly, monomer.

The protein localises to the cytoplasm. The catalysed reaction is tRNA(Arg) + L-arginine + ATP = L-arginyl-tRNA(Arg) + AMP + diphosphate. The protein is Arginine--tRNA ligase of Shewanella denitrificans (strain OS217 / ATCC BAA-1090 / DSM 15013).